Here is a 176-residue protein sequence, read N- to C-terminus: Cytochrome b (176 aa).

Helical transmembrane passes span F33–M53, W77–I98, and W113–L133. H83 and H97 together coordinate heme b.

Belongs to the cytochrome b family. As to quaternary structure, the cytochrome bc1 complex contains 11 subunits: 3 respiratory subunits (MT-CYB, CYC1 and UQCRFS1), 2 core proteins (UQCRC1 and UQCRC2) and 6 low-molecular weight proteins (UQCRH/QCR6, UQCRB/QCR7, UQCRQ/QCR8, UQCR10/QCR9, UQCR11/QCR10 and a cleavage product of UQCRFS1). This cytochrome bc1 complex then forms a dimer. Requires heme b as cofactor.

The protein resides in the mitochondrion inner membrane. Functionally, component of the ubiquinol-cytochrome c reductase complex (complex III or cytochrome b-c1 complex) that is part of the mitochondrial respiratory chain. The b-c1 complex mediates electron transfer from ubiquinol to cytochrome c. Contributes to the generation of a proton gradient across the mitochondrial membrane that is then used for ATP synthesis. The polypeptide is Cytochrome b (MT-CYB) (Eumops perotis (Western bonneted bat)).